The primary structure comprises 92 residues: Cell division protein FtsB (92 aa).

The Cytoplasmic segment spans residues 1–3 (MRF). Residues 4-21 (FQVGLLCLALFVQYRLWF) form a helical membrane-spanning segment. Residues 22 to 92 (GHNGVQDYTR…TFIRVLPAQQ (71 aa)) lie on the Periplasmic side of the membrane. Positions 40–73 (LQTNEKLIKRNKVLTADIEDLKLGHEGIEERARN) form a coiled coil.

This sequence belongs to the FtsB family. As to quaternary structure, part of a complex composed of FtsB, FtsL and FtsQ.

Its subcellular location is the cell inner membrane. In terms of biological role, essential cell division protein. May link together the upstream cell division proteins, which are predominantly cytoplasmic, with the downstream cell division proteins, which are predominantly periplasmic. The sequence is that of Cell division protein FtsB from Pseudoalteromonas translucida (strain TAC 125).